The primary structure comprises 59 residues: Large ribosomal subunit protein uL30 (59 aa).

The protein belongs to the universal ribosomal protein uL30 family. Part of the 50S ribosomal subunit.

This is Large ribosomal subunit protein uL30 from Leptospira biflexa serovar Patoc (strain Patoc 1 / ATCC 23582 / Paris).